A 515-amino-acid polypeptide reads, in one-letter code: Ribonuclease Y (515 aa).

Residues 6-26 (LTSFVIITLSLAVGLTGGYYG) traverse the membrane as a helical segment. The KH domain maps to 205-290 (TVSVVPLPND…EMVEKARKEI (86 aa)). The HD domain occupies 331-424 (VLRHSVEVAH…VQAADAISAS (94 aa)).

It belongs to the RNase Y family.

Its subcellular location is the cell membrane. Its function is as follows. Endoribonuclease that initiates mRNA decay. The chain is Ribonuclease Y from Syntrophomonas wolfei subsp. wolfei (strain DSM 2245B / Goettingen).